A 356-amino-acid chain; its full sequence is Carbohydrate sulfotransferase 10 (356 aa).

The Cytoplasmic segment spans residues 1 to 6; sequence MHHQWL. Residues 7-27 traverse the membrane as a helical; Signal-anchor for type II membrane protein segment; that stretch reads LLAACFWVIFMFMVASKFITL. The Lumenal portion of the chain corresponds to 28 to 356; that stretch reads TFKDPDVYSA…GYQKPDFLLN (329 aa). N-linked (GlcNAc...) asparagine glycosylation is present at Asn-99. Residues 127–133 and 189–197 contribute to the 3'-phosphoadenylyl sulfate site; these read PKVGNTQ and RDPFERLIS. 2 N-linked (GlcNAc...) asparagine glycosylation sites follow: Asn-228 and Asn-316.

It belongs to the sulfotransferase 2 family. In terms of tissue distribution, in fetal tissues, it is predominantly expressed in brain, and weakly expressed in lung, kidney and liver. In adult, it is highly expressed in brain, testis, ovary, expressed at intermediate level in heart, pancreas, skeletal muscle, spleen and thymus, and weakly expressed in other tissues. In brain, it is expressed at higher level in the frontal lobe.

The protein localises to the golgi apparatus membrane. It carries out the reaction 3-O-{beta-D-GlcA-(1-&gt;[3)-alpha-D-Xyl-(1-&gt;3)-beta-D-GlcA-(1-&gt;](n)-4)-beta-D-Xyl-(1-&gt;4)-Rib-ol-P-Rib-ol-P-3-beta-D-GalNAc-(1-&gt;3)-beta-D-GlcNAc-(1-&gt;4)-O-6-P-alpha-D-Man}-L-Thr-[protein] + 3'-phosphoadenylyl sulfate = 3-O-{O-3-S-beta-D-GlcA-(1-&gt;[3)-alpha-D-Xyl-(1-&gt;3)-beta-D-GlcA-(1-&gt;](n)-4)-beta-D-Xyl-(1-&gt;4)-Rib-ol-P-Rib-ol-P-3-beta-D-GalNAc-(1-&gt;3)-beta-D-GlcNAc-(1-&gt;4)-O-6-P-alpha-D-Man}-L-Thr-[protein] + adenosine 3',5'-bisphosphate + H(+). It catalyses the reaction 17beta-estradiol 3-O-(beta-D-glucuronate) + 3'-phosphoadenylyl sulfate = 17beta-estradiol 3-O-(3-sulfo-beta-D-glucuronate) + adenosine 3',5'-bisphosphate + H(+). The catalysed reaction is 17beta-estradiol 3-O-(beta-D-glucuronate) 17-sulfate + 3'-phosphoadenylyl sulfate = 17beta-estradiol 3-O-(3-sulfo-beta-D-glucuronate) 17-sulfate + adenosine 3',5'-bisphosphate + H(+). The enzyme catalyses 17beta-estradiol 17-O-(beta-D-glucuronate) + 3'-phosphoadenylyl sulfate = 17beta-estradiol 17-O-(3-sulfo-beta-D-glucuronate) + adenosine 3',5'-bisphosphate + H(+). It carries out the reaction 16alpha,17beta-estriol 3-O-(beta-D-glucuronate) + 3'-phosphoadenylyl sulfate = 16alpha,17beta-estriol 3-O-(3-sulfo-beta-D-glucuronate) + adenosine 3',5'-bisphosphate + H(+). It catalyses the reaction 16alpha,17beta-estriol 16-O-(beta-D-glucuronate) + 3'-phosphoadenylyl sulfate = 16alpha,17beta-estriol 16-O-(3-sulfo-beta-D-glucuronate) + adenosine 3',5'-bisphosphate + H(+). The catalysed reaction is 16alpha,17beta-estriol 17-O-(beta-D-glucuronate) + 3'-phosphoadenylyl sulfate = 16alpha,17beta-estriol 17-O-(3-sulfo-beta-D-glucuronate) + adenosine 3',5'-bisphosphate + H(+). The enzyme catalyses estrone 3-O-(beta-D-glucuronate) + 3'-phosphoadenylyl sulfate = estrone 3-O-(3-sulfo-beta-D-glucuronate) + adenosine 3',5'-bisphosphate + H(+). It carries out the reaction 3alpha,20alpha-dihydroxy-5beta-pregnane 3-O-(beta-D-glucuronate) + 3'-phosphoadenylyl sulfate = 3alpha,20alpha-dihydroxy-5beta-pregnane 3-O-(3-sulfo-beta-D-glucuronate) + adenosine 3',5'-bisphosphate + H(+). It catalyses the reaction testosterone 17-O-(beta-D-glucuronate) + 3'-phosphoadenylyl sulfate = testosterone 17-O-(3-sulfo-beta-D-glucuronate) + adenosine 3',5'-bisphosphate + H(+). The catalysed reaction is 3beta-androst-5-en-17-one 3-O-(beta-D-glucuronate) + 3'-phosphoadenylyl sulfate = 3beta-androst-5-en-17-one 3-O-(3-sulfo-beta-D-glucuronate) + adenosine 3',5'-bisphosphate + H(+). The enzyme catalyses 3alpha,17alpha-dihydroxy-5beta-androstane-11-one-17beta-carboxylate 3-O-(beta-D-glucuronate) + 3'-phosphoadenylyl sulfate = 3alpha,17alpha-dihydroxy-5beta-androstane-11-one-17beta-carboxylate 3-O-(3-sulfo-beta-D-glucuronate) + adenosine 3',5'-bisphosphate + H(+). It carries out the reaction 3alpha-hydroxyetiocholan-17-one 3-O-(beta-D-glucuronate) + 3'-phosphoadenylyl sulfate = 3alpha-hydroxyetiocholan-17-one 3-O-(3-sulfo-beta-D-glucuronate) + adenosine 3',5'-bisphosphate + H(+). It participates in steroid metabolism. It functions in the pathway protein modification; carbohydrate sulfation. Functionally, catalyzes the transfer of sulfate from 3'-phosphoadenylyl sulfate (PAPS) to position 3 of terminal glucuronic acid of both protein- and lipid-linked oligosaccharides. Participates in biosynthesis of HNK-1 carbohydrate structure 3-O-sulfo-beta-D-GlcA-(1-&gt;3)-beta-D-Gal-(1-&gt;4)-D-GlcNAc-R, a sulfated glucuronyl-lactosaminyl residue carried by many neural recognition molecules, which is involved in cell interactions during ontogenetic development and in synaptic plasticity in the adult. May be indirectly involved in synapse plasticity of the hippocampus, via its role in HNK-1 biosynthesis. Sulfates terminal glucuronyl residue of the laminin globular (LG)-domain binding epitope on DAG1/alpha-dystroglycan and prevents further polymerization by LARGE1 glycosyltransferase. Likely defines the chain length of LG epitope, conferring binding specificity to extracellular matrix components. Plays a role in down-regulating the steroid hormones. Sulfates glucuronidated estrogens and androgens with an impact in hormone cycle and fertility. Has a preference for glucuronyl moiety at the 3-hydroxyl group of a sterol ring rather than the 17-hydroxyl group, showing high catalytic efficiency for 17beta-estradiol 3-O-(beta-D-glucuronate) and dehydroepiandrosterone 3-O-(beta-D-glucuronate) hormones. The chain is Carbohydrate sulfotransferase 10 from Homo sapiens (Human).